Reading from the N-terminus, the 102-residue chain is Large ribosomal subunit protein uL23 (102 aa).

Belongs to the universal ribosomal protein uL23 family. Part of the 50S ribosomal subunit. Contacts protein L29, and trigger factor when it is bound to the ribosome.

Functionally, one of the early assembly proteins it binds 23S rRNA. One of the proteins that surrounds the polypeptide exit tunnel on the outside of the ribosome. Forms the main docking site for trigger factor binding to the ribosome. The sequence is that of Large ribosomal subunit protein uL23 from Paramagnetospirillum magneticum (strain ATCC 700264 / AMB-1) (Magnetospirillum magneticum).